A 277-amino-acid chain; its full sequence is Thymidylate synthase (277 aa).

A dUMP-binding site is contributed by R21. A (6R)-5,10-methylene-5,6,7,8-tetrahydrofolate-binding site is contributed by H51. 126–127 (RR) provides a ligand contact to dUMP. C159 acts as the Nucleophile in catalysis. Residues 179 to 182 (RSAD), N190, and 220 to 222 (HLY) each bind dUMP. D182 is a (6R)-5,10-methylene-5,6,7,8-tetrahydrofolate binding site. Residue S276 coordinates (6R)-5,10-methylene-5,6,7,8-tetrahydrofolate.

It belongs to the thymidylate synthase family. Bacterial-type ThyA subfamily. Homodimer.

Its subcellular location is the cytoplasm. It carries out the reaction dUMP + (6R)-5,10-methylene-5,6,7,8-tetrahydrofolate = 7,8-dihydrofolate + dTMP. It participates in pyrimidine metabolism; dTTP biosynthesis. Functionally, catalyzes the reductive methylation of 2'-deoxyuridine-5'-monophosphate (dUMP) to 2'-deoxythymidine-5'-monophosphate (dTMP) while utilizing 5,10-methylenetetrahydrofolate (mTHF) as the methyl donor and reductant in the reaction, yielding dihydrofolate (DHF) as a by-product. This enzymatic reaction provides an intracellular de novo source of dTMP, an essential precursor for DNA biosynthesis. In Teredinibacter turnerae (strain ATCC 39867 / T7901), this protein is Thymidylate synthase.